We begin with the raw amino-acid sequence, 511 residues long: 2,3-bisphosphoglycerate-independent phosphoglycerate mutase (511 aa).

Residues aspartate 14 and serine 64 each contribute to the Mn(2+) site. Residue serine 64 is the Phosphoserine intermediate of the active site. Residues histidine 125, 155 to 156 (RD), arginine 187, arginine 193, 259 to 262 (RADR), and lysine 333 contribute to the substrate site. Mn(2+) contacts are provided by aspartate 400, histidine 404, aspartate 441, histidine 442, and histidine 460.

This sequence belongs to the BPG-independent phosphoglycerate mutase family. Monomer. Requires Mn(2+) as cofactor.

It carries out the reaction (2R)-2-phosphoglycerate = (2R)-3-phosphoglycerate. The protein operates within carbohydrate degradation; glycolysis; pyruvate from D-glyceraldehyde 3-phosphate: step 3/5. Functionally, catalyzes the interconversion of 2-phosphoglycerate and 3-phosphoglycerate. In Pseudomonas entomophila (strain L48), this protein is 2,3-bisphosphoglycerate-independent phosphoglycerate mutase.